A 511-amino-acid polypeptide reads, in one-letter code: Fas-activated serine/threonine kinase (511 aa).

One can recognise an RAP domain in the interval valine 439–glutamine 497.

This sequence belongs to the FAST protein kinase family. In terms of assembly, interacts with TIA1; the interactions leads to TIA1 phosphorylation. Interacts with TIAR. Autophosphorylated on serine/threonine residues. Activated by dephosphorylation.

Its subcellular location is the mitochondrion matrix. The catalysed reaction is L-seryl-[Fas-activated protein] + ATP = O-phospho-L-seryl-[Fas-activated protein] + ADP + H(+). It carries out the reaction L-threonyl-[Fas-activated protein] + ATP = O-phospho-L-threonyl-[Fas-activated protein] + ADP + H(+). The enzyme catalyses L-seryl-[protein] + ATP = O-phospho-L-seryl-[protein] + ADP + H(+). It catalyses the reaction L-threonyl-[protein] + ATP = O-phospho-L-threonyl-[protein] + ADP + H(+). Functionally, phosphorylates the splicing regulator TIA1, thereby promoting the inclusion of FAS exon 6, which leads to an mRNA encoding a pro-apoptotic form of the receptor. Required for the biogenesis of some mitochondrial-encoded mRNAs, specifically stabilizes ND6 (NADH dehydrogenase complex subunit 6) mRNA, and regulates its levels. In Mus musculus (Mouse), this protein is Fas-activated serine/threonine kinase (Fastk).